A 326-amino-acid chain; its full sequence is L-carnitine dehydrogenase (326 aa).

Position 19–24 (19–24 (GTGVIG)) interacts with NAD(+).

It belongs to the 3-hydroxyacyl-CoA dehydrogenase family. L-carnitine dehydrogenase subfamily. Homodimer.

The protein resides in the cytoplasm. The enzyme catalyses carnitine + NAD(+) = 3-dehydrocarnitine + NADH + H(+). The protein operates within amine and polyamine metabolism; carnitine metabolism. Functionally, catalyzes the NAD(+)-dependent oxidation of L-carnitine to 3-dehydrocarnitine. In Bacillus cereus (strain ZK / E33L), this protein is L-carnitine dehydrogenase.